A 253-amino-acid chain; its full sequence is Protein C1orf43 (253 aa).

Residues 11–31 (VNVVLVMAYGSLVFVLLFIFV) traverse the membrane as a helical segment.

The protein resides in the membrane. The protein localises to the golgi apparatus. It is found in the mitochondrion. Its function is as follows. General regulator of phagocytosis. Required to uptake Gram negative bacterium by macrophages. The polypeptide is Protein C1orf43 (C1orf43) (Homo sapiens (Human)).